The following is a 234-amino-acid chain: Large ribosomal subunit protein uL1 (234 aa).

This sequence belongs to the universal ribosomal protein uL1 family. In terms of assembly, part of the 50S ribosomal subunit.

Binds directly to 23S rRNA. The L1 stalk is quite mobile in the ribosome, and is involved in E site tRNA release. Functionally, protein L1 is also a translational repressor protein, it controls the translation of the L11 operon by binding to its mRNA. The chain is Large ribosomal subunit protein uL1 from Pseudoalteromonas translucida (strain TAC 125).